We begin with the raw amino-acid sequence, 176 residues long: UBA-like domain-containing protein 1 (176 aa).

The interval 87-176 is disordered; it reads SESFHGGGGS…RAHPAMEAER (90 aa). The segment covering 120-137 has biased composition (low complexity); it reads TPSWPTAASPPGGPQQHQ. The segment covering 138-150 has biased composition (pro residues); that stretch reads PQPPLWTPAPPSP. Basic and acidic residues predominate over residues 166-176; sequence PRAHPAMEAER.

This sequence belongs to the UBALD family.

This is UBA-like domain-containing protein 1 (Ubald1) from Mus musculus (Mouse).